The following is a 156-amino-acid chain: MPRKGPAPKRPLVVDPVYGSPVVTQLINKVLQDGKKSTAERIVYGALEGVRNKTNSDPVATLKKALENVKPALEVRSRRVGGATYQVPVEVKAGRAQALSLRWLVGYSKARRENTMTERLQNEILDASNGLGAAVKRREDTHKMAESNKAFAHYRW.

It belongs to the universal ribosomal protein uS7 family. Part of the 30S ribosomal subunit. Contacts proteins S9 and S11.

Its function is as follows. One of the primary rRNA binding proteins, it binds directly to 16S rRNA where it nucleates assembly of the head domain of the 30S subunit. Is located at the subunit interface close to the decoding center, probably blocks exit of the E-site tRNA. This is Small ribosomal subunit protein uS7 from Kocuria rhizophila (strain ATCC 9341 / DSM 348 / NBRC 103217 / DC2201).